The sequence spans 101 residues: Putative antitoxin HigA2 (101 aa).

In terms of domain architecture, HTH cro/C1-type spans Leu-35–Thr-90. Residues Gln-46–Asn-65 constitute a DNA-binding region (H-T-H motif).

In terms of biological role, putative antitoxin component of a type II toxin-antitoxin (TA) system. Its cognate toxin would be HigB2. This is Putative antitoxin HigA2 from Mycobacterium tuberculosis (strain ATCC 25618 / H37Rv).